The sequence spans 163 residues: Lipoprotein signal peptidase (163 aa).

4 consecutive transmembrane segments (helical) span residues 9 to 29, 42 to 62, 67 to 87, and 93 to 113; these read AWPWLWFSVLVILLDQLSKYL, ILPFLNFTLNYNTGAAFSFLG, WQIIFFAAISFVVSIFLILWL, and SEIMMSLGLSLIIGGALGNFI. Active-site residues include D123 and D141. The helical transmembrane segment at 137–157 threads the bilayer; it reads FNVADSAICVGVFLLIVHMLL.

Belongs to the peptidase A8 family.

Its subcellular location is the cell inner membrane. It carries out the reaction Release of signal peptides from bacterial membrane prolipoproteins. Hydrolyzes -Xaa-Yaa-Zaa-|-(S,diacylglyceryl)Cys-, in which Xaa is hydrophobic (preferably Leu), and Yaa (Ala or Ser) and Zaa (Gly or Ala) have small, neutral side chains.. Its pathway is protein modification; lipoprotein biosynthesis (signal peptide cleavage). This protein specifically catalyzes the removal of signal peptides from prolipoproteins. The chain is Lipoprotein signal peptidase from Coxiella burnetii (strain RSA 331 / Henzerling II).